We begin with the raw amino-acid sequence, 100 residues long: Small ribosomal subunit protein uS14 (100 aa).

The protein belongs to the universal ribosomal protein uS14 family. As to quaternary structure, part of the 30S ribosomal subunit. Contacts proteins S3 and S10.

Its function is as follows. Binds 16S rRNA, required for the assembly of 30S particles and may also be responsible for determining the conformation of the 16S rRNA at the A site. The chain is Small ribosomal subunit protein uS14 from Nostoc sp. (strain PCC 7120 / SAG 25.82 / UTEX 2576).